The following is a 144-amino-acid chain: Large ribosomal subunit protein uL15 (144 aa).

The segment at 1-52 is disordered; sequence MKLHTLKSTPGARVEKHRVGRGHAAGKGKQAGKGQSGQNKRHGHRLGFEGGQ. A compositionally biased stretch (basic residues) spans 15–26; it reads EKHRVGRGHAAG.

The protein belongs to the universal ribosomal protein uL15 family. In terms of assembly, part of the 50S ribosomal subunit.

Binds to the 23S rRNA. The chain is Large ribosomal subunit protein uL15 from Mycoplasmopsis agalactiae (strain NCTC 10123 / CIP 59.7 / PG2) (Mycoplasma agalactiae).